Here is a 508-residue protein sequence, read N- to C-terminus: ATP synthase subunit alpha (508 aa).

An ATP-binding site is contributed by 169-176 (GDRGTGKS).

Belongs to the ATPase alpha/beta chains family. In terms of assembly, F-type ATPases have 2 components, CF(1) - the catalytic core - and CF(0) - the membrane proton channel. CF(1) has five subunits: alpha(3), beta(3), gamma(1), delta(1), epsilon(1). CF(0) has three main subunits: a(1), b(2) and c(9-12). The alpha and beta chains form an alternating ring which encloses part of the gamma chain. CF(1) is attached to CF(0) by a central stalk formed by the gamma and epsilon chains, while a peripheral stalk is formed by the delta and b chains.

It localises to the cell membrane. It carries out the reaction ATP + H2O + 4 H(+)(in) = ADP + phosphate + 5 H(+)(out). Its function is as follows. Produces ATP from ADP in the presence of a proton gradient across the membrane. The alpha chain is a regulatory subunit. The polypeptide is ATP synthase subunit alpha (Natranaerobius thermophilus (strain ATCC BAA-1301 / DSM 18059 / JW/NM-WN-LF)).